The following is a 317-amino-acid chain: Ribosomal protein L11 methyltransferase (317 aa).

Positions 169, 190, 211, and 256 each coordinate S-adenosyl-L-methionine.

Belongs to the methyltransferase superfamily. PrmA family.

Its subcellular location is the cytoplasm. It carries out the reaction L-lysyl-[protein] + 3 S-adenosyl-L-methionine = N(6),N(6),N(6)-trimethyl-L-lysyl-[protein] + 3 S-adenosyl-L-homocysteine + 3 H(+). In terms of biological role, methylates ribosomal protein L11. The sequence is that of Ribosomal protein L11 methyltransferase from Helicobacter hepaticus (strain ATCC 51449 / 3B1).